Reading from the N-terminus, the 347-residue chain is L-threonine 3-dehydrogenase (347 aa).

C42 provides a ligand contact to Zn(2+). Active-site charge relay system residues include T44 and H47. Residues H67, E68, C97, C100, C103, and C111 each coordinate Zn(2+). Residues I179, E199, R204, 266–268, and 291–292 contribute to the NAD(+) site; these read LGL and IT.

This sequence belongs to the zinc-containing alcohol dehydrogenase family. Homotetramer. It depends on Zn(2+) as a cofactor.

The protein localises to the cytoplasm. It catalyses the reaction L-threonine + NAD(+) = (2S)-2-amino-3-oxobutanoate + NADH + H(+). Its pathway is amino-acid degradation; L-threonine degradation via oxydo-reductase pathway; glycine from L-threonine: step 1/2. Catalyzes the NAD(+)-dependent oxidation of L-threonine to 2-amino-3-ketobutyrate. The sequence is that of L-threonine 3-dehydrogenase from Caldanaerobacter subterraneus subsp. tengcongensis (strain DSM 15242 / JCM 11007 / NBRC 100824 / MB4) (Thermoanaerobacter tengcongensis).